The following is a 359-amino-acid chain: Protein RecA (359 aa).

73 to 80 (GPESSGKT) serves as a coordination point for ATP.

The protein belongs to the RecA family.

The protein localises to the cytoplasm. Functionally, can catalyze the hydrolysis of ATP in the presence of single-stranded DNA, the ATP-dependent uptake of single-stranded DNA by duplex DNA, and the ATP-dependent hybridization of homologous single-stranded DNAs. It interacts with LexA causing its activation and leading to its autocatalytic cleavage. The protein is Protein RecA of Desulfovibrio desulfuricans (strain ATCC 27774 / DSM 6949 / MB).